We begin with the raw amino-acid sequence, 572 residues long: 2-isopropylmalate synthase (572 aa).

The Pyruvate carboxyltransferase domain occupies 39–313; sequence PVWMSTDLRD…HPGLDFSRIN (275 aa). Residues Asp48, His252, His254, and Asn288 each contribute to the Mg(2+) site. A regulatory domain region spans residues 445-572; the sequence is VAAPYAYVEH…GVGRQVAATR (128 aa).

It belongs to the alpha-IPM synthase/homocitrate synthase family. LeuA type 2 subfamily. As to quaternary structure, homodimer. Requires Mg(2+) as cofactor.

It localises to the cytoplasm. The catalysed reaction is 3-methyl-2-oxobutanoate + acetyl-CoA + H2O = (2S)-2-isopropylmalate + CoA + H(+). It participates in amino-acid biosynthesis; L-leucine biosynthesis; L-leucine from 3-methyl-2-oxobutanoate: step 1/4. Catalyzes the condensation of the acetyl group of acetyl-CoA with 3-methyl-2-oxobutanoate (2-ketoisovalerate) to form 3-carboxy-3-hydroxy-4-methylpentanoate (2-isopropylmalate). In Azoarcus sp. (strain BH72), this protein is 2-isopropylmalate synthase.